Reading from the N-terminus, the 416-residue chain is MTDRLTPRRAAPRQPALLPLADRCTALLSRLSHADAAGGIVLLIAAAAALAWANSPWAASYHALWHVPLSVAVGGWQLTQSLHFWVNDALMTVFFLVVGLEIRRELHDGVLAQPRDALLPVLAALGGVAVPALLYLALVPPALRSGWAVPTATDIAFAVGVLALLGRGLPPVLRVFLLTLAIIDDLVAVLIIALFYSGGLQWPMFGIAALGLAGVLLLQQLGVRRAWAYVPAGAVLWWGIWQTGAHPTLAGVVLGLVTPVHALAGREPAPPVQRVQASLHPWVTFGVMPLFALANAGVALGSAGGAQPAAPGTGLLMAAVAVALVAGKPLGVLLACWLAVRLRLCALPAGMGWGGLLLTGLLAGIGFTMAIFIATLAFDSAALLDAAKRGVLLASGLAALLGLAWGWWLQRRATTA.

The next 11 helical transmembrane spans lie at 39-59, 82-102, 119-139, 146-166, 175-195, 198-218, 234-254, 281-301, 315-335, 353-373, and 390-410; these read GIVL…PWAA, LHFW…GLEI, LPVL…LALV, GWAV…ALLG, VFLL…IALF, GGLQ…VLLL, AVLW…GVVL, PWVT…VALG, LLMA…VLLA, WGGL…AIFI, and GVLL…WWLQ.

It belongs to the NhaA Na(+)/H(+) (TC 2.A.33) antiporter family.

It is found in the cell inner membrane. The catalysed reaction is Na(+)(in) + 2 H(+)(out) = Na(+)(out) + 2 H(+)(in). Na(+)/H(+) antiporter that extrudes sodium in exchange for external protons. This Acidovorax sp. (strain JS42) protein is Na(+)/H(+) antiporter NhaA.